A 340-amino-acid chain; its full sequence is UDP-3-O-acylglucosamine N-acyltransferase (340 aa).

The active-site Proton acceptor is the His-238.

The protein belongs to the transferase hexapeptide repeat family. LpxD subfamily. Homotrimer.

The enzyme catalyses a UDP-3-O-[(3R)-3-hydroxyacyl]-alpha-D-glucosamine + a (3R)-hydroxyacyl-[ACP] = a UDP-2-N,3-O-bis[(3R)-3-hydroxyacyl]-alpha-D-glucosamine + holo-[ACP] + H(+). It functions in the pathway bacterial outer membrane biogenesis; LPS lipid A biosynthesis. Functionally, catalyzes the N-acylation of UDP-3-O-acylglucosamine using 3-hydroxyacyl-ACP as the acyl donor. Is involved in the biosynthesis of lipid A, a phosphorylated glycolipid that anchors the lipopolysaccharide to the outer membrane of the cell. This Psychromonas ingrahamii (strain DSM 17664 / CCUG 51855 / 37) protein is UDP-3-O-acylglucosamine N-acyltransferase.